The sequence spans 148 residues: UPF0756 membrane protein YeaL (148 aa).

The next 4 membrane-spanning stretches (helical) occupy residues 14–34 (ALGF…LIIV), 51–71 (LSIG…SGTL), 86–106 (LVAI…VTLM), and 121–141 (VLGV…AGLV).

The protein belongs to the UPF0756 family.

The protein localises to the cell membrane. The polypeptide is UPF0756 membrane protein YeaL (Escherichia coli O127:H6 (strain E2348/69 / EPEC)).